The following is a 561-amino-acid chain: Putative transport protein YbjL (561 aa).

5 helical membrane-spanning segments follow: residues 8-28, 32-52, 66-86, 94-114, and 158-178; these read LLNGNYILLLFVVLTLGLCLG, LGSIQLGNSIGVLVVSLLLGQ, FMLFIFCVGVEAGPNFFSIFF, MLALVMVGSALVIALGLGKLF, and NLSLGYALTYLIGLVSLIVGA. 2 RCK C-terminal domains span residues 200–288 and 292–373; these read RGLD…SFRN and VFDR…RIGF. The next 5 membrane-spanning stretches (helical) occupy residues 383 to 403, 406 to 426, 451 to 471, 475 to 495, and 540 to 560; these read LLAFCAFFVIGLMIGMITFQF, FSFGMGNAAGLLFAGIMLGFM, VFMAGVGLSAGSGINNGLGAI, MLIAGLIVSLVPVVICFLFGA, and AIANVLLTLAGTIIVMVWPGL.

This sequence belongs to the AAE transporter (TC 2.A.81) family. YbjL subfamily.

It is found in the cell membrane. This is Putative transport protein YbjL from Shigella sonnei (strain Ss046).